The chain runs to 473 residues: Adenosylhomocysteinase (473 aa).

Substrate contacts are provided by Thr64, Asp139, and Glu199. 200–202 (TTT) serves as a coordination point for NAD(+). Lys229 and Asp233 together coordinate substrate. NAD(+) is bound by residues Asn234, 263–268 (GYGDVG), Glu286, Asn321, 342–344 (IGH), and Asn387.

Belongs to the adenosylhomocysteinase family. It depends on NAD(+) as a cofactor.

It localises to the cytoplasm. It catalyses the reaction S-adenosyl-L-homocysteine + H2O = L-homocysteine + adenosine. The protein operates within amino-acid biosynthesis; L-homocysteine biosynthesis; L-homocysteine from S-adenosyl-L-homocysteine: step 1/1. May play a key role in the regulation of the intracellular concentration of adenosylhomocysteine. The sequence is that of Adenosylhomocysteinase from Paraburkholderia xenovorans (strain LB400).